Here is a 523-residue protein sequence, read N- to C-terminus: Cytoplasmic dynein 1 light intermediate chain 1 (523 aa).

The segment at 1-45 is disordered; it reads MAAVGRVGSFGSSPPGLASTYASGPLANELASGSGGPAAGDDEDG. 74–81 contributes to the ATP binding site; it reads GEDGAGKT. Serine 207 is modified (phosphoserine). Threonine 213 is modified (phosphothreonine). Disordered regions lie at residues 387–434 and 457–523; these read PPTA…DPNM and GSPG…GEAS. Residues serine 398 and serine 405 each carry the phosphoserine modification. At threonine 408 the chain carries Phosphothreonine. Phosphoserine occurs at positions 412, 419, 421, and 427. Low complexity predominate over residues 412–421; that stretch reads SVSSNVASVS. Residues 458–473 show a composition bias toward gly residues; it reads SPGGPGVGGSPGGGAA. The segment covering 474–483 has biased composition (low complexity); the sequence is GASTSLPPSA. 2 positions are modified to phosphoserine: serine 486 and serine 510. Threonine 512 and threonine 513 each carry phosphothreonine. At serine 516 the chain carries Phosphoserine.

The protein belongs to the dynein light intermediate chain family. As to quaternary structure, homodimer. The cytoplasmic dynein 1 complex consists of two catalytic heavy chains (HCs) and a number of non-catalytic subunits presented by intermediate chains (ICs), light intermediate chains (LICs) and light chains (LCs); the composition seems to vary in respect to the IC, LIC and LC composition. The heavy chain homodimer serves as a scaffold for the probable homodimeric assembly of the respective non-catalytic subunits. The ICs and LICs bind directly to the HC dimer and the LCs assemble on the IC dimer. Self-associates. Interacts with DYNC1H1; DYNC1LI1 and DYNC1LI2 bind mutually exclusive to DYNC1H1. Interacts with PCNT. Forms a complex with RAB11FIP3 and RAB11A1; the interaction between DYNC1LI1 and RAB11FIP3 is direct and induces DYNC1LI1 localization onto endosomal membrane; the complex regulates endocytic trafficking. Interacts with RUFY3. In terms of processing, phosphorylated during mitosis but not in interphase.

Its subcellular location is the cytoplasm. The protein localises to the chromosome. It is found in the centromere. The protein resides in the kinetochore. It localises to the cytoskeleton. Its subcellular location is the spindle pole. The protein localises to the recycling endosome membrane. Acts as one of several non-catalytic accessory components of the cytoplasmic dynein 1 complex that are thought to be involved in linking dynein to cargos and to adapter proteins that regulate dynein function. Cytoplasmic dynein 1 acts as a motor for the intracellular retrograde motility of vesicles and organelles along microtubules. May play a role in binding dynein to membranous organelles or chromosomes. Probably involved in the microtubule-dependent transport of pericentrin. Is required for progress through the spindle assembly checkpoint. The phosphorylated form appears to be involved in the selective removal of MAD1L1 and MAD1L2 but not BUB1B from kinetochores. Forms a functional Rab11/RAB11FIP3/dynein complex onto endosomal membrane that regulates the movement of peripheral sorting endosomes (SE) along microtubule tracks toward the microtubule organizing center/centrosome, generating the endosomal recycling compartment (ERC). The sequence is that of Cytoplasmic dynein 1 light intermediate chain 1 (Dync1li1) from Rattus norvegicus (Rat).